A 435-amino-acid chain; its full sequence is Cyclin-J-like protein (435 aa).

Residues 14–191 (DVHCTLREKE…LLEAFSWNLC (178 aa)) enclose the Cyclin N-terminal domain. The tract at residues 120-142 (SSNSPASAPHPPPTPPQVAETTG) is disordered.

It belongs to the cyclin family. Cyclin J subfamily.

The sequence is that of Cyclin-J-like protein (CCNJL) from Homo sapiens (Human).